The sequence spans 359 residues: DNA polymerase IV (359 aa).

Residues 4 to 184 (IVHVDMDAFY…LKVNRIPGVG (181 aa)) enclose the UmuC domain. Mg(2+)-binding residues include aspartate 8 and aspartate 102. Residue glutamate 103 is part of the active site.

Belongs to the DNA polymerase type-Y family. In terms of assembly, monomer. The cofactor is Mg(2+).

The protein localises to the cytoplasm. The enzyme catalyses DNA(n) + a 2'-deoxyribonucleoside 5'-triphosphate = DNA(n+1) + diphosphate. Functionally, poorly processive, error-prone DNA polymerase involved in untargeted mutagenesis. Copies undamaged DNA at stalled replication forks, which arise in vivo from mismatched or misaligned primer ends. These misaligned primers can be extended by PolIV. Exhibits no 3'-5' exonuclease (proofreading) activity. May be involved in translesional synthesis, in conjunction with the beta clamp from PolIII. This is DNA polymerase IV from Xanthomonas euvesicatoria pv. vesicatoria (strain 85-10) (Xanthomonas campestris pv. vesicatoria).